The sequence spans 273 residues: Undecaprenyl-diphosphatase (273 aa).

Helical transmembrane passes span 13–35 (LGVV…IIVG), 45–65 (ANTF…VMFW), 90–110 (LSLI…LIFH), 116–136 (LFNP…LIAA), 157–177 (AFVI…RSGA), 190–210 (YAAS…ATVL), 222–242 (GDVP…LIAI), and 252–272 (ISFI…YVVF).

Belongs to the UppP family.

The protein resides in the cell inner membrane. It carries out the reaction di-trans,octa-cis-undecaprenyl diphosphate + H2O = di-trans,octa-cis-undecaprenyl phosphate + phosphate + H(+). Its function is as follows. Catalyzes the dephosphorylation of undecaprenyl diphosphate (UPP). Confers resistance to bacitracin. This chain is Undecaprenyl-diphosphatase, found in Klebsiella pneumoniae subsp. pneumoniae (strain ATCC 700721 / MGH 78578).